Consider the following 132-residue polypeptide: Small ribosomal subunit protein uS8 (132 aa).

It belongs to the universal ribosomal protein uS8 family. In terms of assembly, part of the 30S ribosomal subunit. Contacts proteins S5 and S12.

Functionally, one of the primary rRNA binding proteins, it binds directly to 16S rRNA central domain where it helps coordinate assembly of the platform of the 30S subunit. This Granulibacter bethesdensis (strain ATCC BAA-1260 / CGDNIH1) protein is Small ribosomal subunit protein uS8.